Reading from the N-terminus, the 104-residue chain is Small ribosomal subunit protein bS16 (104 aa).

This sequence belongs to the bacterial ribosomal protein bS16 family.

The polypeptide is Small ribosomal subunit protein bS16 (Gemmatimonas aurantiaca (strain DSM 14586 / JCM 11422 / NBRC 100505 / T-27)).